The chain runs to 267 residues: Putative [LysW]-aminoadipate/[LysW]-glutamate kinase (267 aa).

Residues 37 to 38 (GG), R64, and N169 contribute to the substrate site.

This sequence belongs to the acetylglutamate kinase family. LysZ subfamily.

The protein localises to the cytoplasm. The enzyme catalyses [amino-group carrier protein]-C-terminal-N-(1,4-dicarboxybutan-1-yl)-L-glutamine + ATP = [amino-group carrier protein]-C-terminal-N-(1-carboxy-5-phosphooxy-5-oxopentan-1-yl)-L-glutamine + ADP. The catalysed reaction is [amino-group carrier protein]-C-terminal-gamma-(L-glutamyl)-L-glutamate + ATP = [amino-group carrier protein]-C-terminal-gamma-(5-phospho-L-glutamyl)-L-glutamate + ADP. Its pathway is amino-acid biosynthesis; L-lysine biosynthesis via AAA pathway; L-lysine from L-alpha-aminoadipate (Thermus route): step 2/5. It functions in the pathway amino-acid biosynthesis; L-arginine biosynthesis. Functionally, involved in both the arginine and lysine biosynthetic pathways. Phosphorylates the LysW-bound precursors glutamate (for arginine biosynthesis), respectively alpha-aminoadipate (for lysine biosynthesis). The polypeptide is Putative [LysW]-aminoadipate/[LysW]-glutamate kinase (Nitrosopumilus maritimus (strain SCM1)).